The chain runs to 279 residues: Ribosomal RNA small subunit methyltransferase J (279 aa).

Residues 138–139 (ER) and aspartate 194 each bind S-adenosyl-L-methionine.

Belongs to the methyltransferase superfamily. RsmJ family.

The protein resides in the cytoplasm. The catalysed reaction is guanosine(1516) in 16S rRNA + S-adenosyl-L-methionine = N(2)-methylguanosine(1516) in 16S rRNA + S-adenosyl-L-homocysteine + H(+). Its function is as follows. Specifically methylates the guanosine in position 1516 of 16S rRNA. This Acinetobacter baumannii (strain SDF) protein is Ribosomal RNA small subunit methyltransferase J.